A 304-amino-acid polypeptide reads, in one-letter code: Proteasome subunit beta (304 aa).

Positions 1 to 65 are cleaved as a propeptide — removed in mature form; by autocatalysis; the sequence is MTWPHFEQLA…LTPTDAVPHG (65 aa). The Nucleophile role is filled by T66.

The protein belongs to the peptidase T1B family. The 20S proteasome core is composed of 14 alpha and 14 beta subunits that assemble into four stacked heptameric rings, resulting in a barrel-shaped structure. The two inner rings, each composed of seven catalytic beta subunits, are sandwiched by two outer rings, each composed of seven alpha subunits. The catalytic chamber with the active sites is on the inside of the barrel. Has a gated structure, the ends of the cylinder being occluded by the N-termini of the alpha-subunits. Is capped by the proteasome-associated ATPase, ARC.

It is found in the cytoplasm. It catalyses the reaction Cleavage of peptide bonds with very broad specificity.. Its pathway is protein degradation; proteasomal Pup-dependent pathway. The formation of the proteasomal ATPase ARC-20S proteasome complex, likely via the docking of the C-termini of ARC into the intersubunit pockets in the alpha-rings, may trigger opening of the gate for substrate entry. Interconversion between the open-gate and close-gate conformations leads to a dynamic regulation of the 20S proteasome proteolysis activity. Component of the proteasome core, a large protease complex with broad specificity involved in protein degradation. This chain is Proteasome subunit beta, found in Mycobacterium sp. (strain JLS).